Reading from the N-terminus, the 64-residue chain is DNA gyrase inhibitor YacG (64 aa).

Zn(2+)-binding residues include cysteine 7, cysteine 10, cysteine 26, and cysteine 30. The tract at residues 44–64 is disordered; the sequence is RIPGEIDPELLPYPEEGEQWQ.

It belongs to the DNA gyrase inhibitor YacG family. Interacts with GyrB. The cofactor is Zn(2+).

Functionally, inhibits all the catalytic activities of DNA gyrase by preventing its interaction with DNA. Acts by binding directly to the C-terminal domain of GyrB, which probably disrupts DNA binding by the gyrase. This Aeromonas hydrophila subsp. hydrophila (strain ATCC 7966 / DSM 30187 / BCRC 13018 / CCUG 14551 / JCM 1027 / KCTC 2358 / NCIMB 9240 / NCTC 8049) protein is DNA gyrase inhibitor YacG.